The following is a 551-amino-acid chain: MYCVQCEQTIRTPAGNGCSYAQGMCGKSAETSDLQDLLVAALQSLSAWALLARELDIRDRTIDSFAPRAFFATLTNVNFDSARIIGYAREALAMRDSLRTACLAKAPGTQCDHPLADLRLQGEDVATLRRQAAEFALDSDRAEIGDDIHGLRMLSLYGLKGAAAYMEHAHVLGQHSEAIYAQYHHYMAWLGTRPCDMDTLLDNAMGIGKMNFAIMAQLDKGETEAYGDPTPTSVNVRPLAGKCILISGHDLKDLQMLLEQTDGLGINVYTHGEMLPAHGYPELRKYRHLVGNYGSGWQNQQQEFARFPGPILMTSNCIIDPNVGNYSDRIWTRSIVGWPGVRHLEGDDFSQVIAQAQVCDGFPYSEIEHLITVGFGRATLLNAADSVIDLVAQKKLRHVFLLGGCDGSRDERSYYTDFARAIPQDCLIMTLACGKYRFNKLEFGTLEGLPRLLDVGQCNDAYGAIMLAVNLAEKLGCGINDLPLSLILSWFEQKAIVILLTLLALGVKNIYTGPTAPGFLTDNLLAILNQRFGMRAISTVDADLNGILGHA.

Cys-3, Cys-6, Cys-18, and Cys-25 together coordinate [2Fe-2S] cluster. The hybrid [4Fe-2O-2S] cluster site is built by His-249, Glu-273, Cys-317, Cys-405, Cys-433, Cys-458, Glu-492, and Lys-494. Cys-405 bears the Cysteine persulfide mark.

It belongs to the HCP family. It depends on [2Fe-2S] cluster as a cofactor. Hybrid [4Fe-2O-2S] cluster serves as cofactor.

It is found in the cytoplasm. The catalysed reaction is A + NH4(+) + H2O = hydroxylamine + AH2 + H(+). Its function is as follows. Catalyzes the reduction of hydroxylamine to form NH(3) and H(2)O. The sequence is that of Hydroxylamine reductase from Edwardsiella ictaluri (strain 93-146).